We begin with the raw amino-acid sequence, 568 residues long: Type 3 secretion system secretin (568 aa).

The first 15 residues, 1–15, serve as a signal peptide directing secretion; the sequence is MAAALLLWTAGTVCA. Residues 203-292 are disordered; that stretch reads YGGDGPSDSG…RGSTPIIRAD (90 aa). Residues 243–257 are compositionally biased toward gly residues; that stretch reads LGGGKSPLPPGGTGQ. A compositionally biased stretch (basic and acidic residues) spans 273 to 284; that stretch reads NRLRSDELDDRG.

This sequence belongs to the bacterial secretin family. T3SS SctC subfamily. In terms of assembly, the core secretion machinery of the T3SS is composed of approximately 20 different proteins, including cytoplasmic components, a base, an export apparatus and a needle. This subunit is part of the base, which anchors the injectisome in the bacterial cell envelope. Forms a stable homooligomeric complex.

It localises to the cell outer membrane. Component of the type III secretion system (T3SS), also called injectisome, which is used to inject bacterial effector proteins into eukaryotic host cells. Forms a ring-shaped multimeric structure with an apparent central pore in the outer membrane. The protein is Type 3 secretion system secretin of Ralstonia nicotianae (strain ATCC BAA-1114 / GMI1000) (Ralstonia solanacearum).